Consider the following 161-residue polypeptide: MIVLTRRIDESDTITGTVTLDVDSRIKSRLRVTLDDGREAGLMLERGHLLRGGELLADAAGSQVVRVLAAPEAVSTVRCSDPHLLARAAYHLGNRHVPLQIQPGLLRYQHDHVLDDMLRGLGLAVEAEQAPFEPEAGAYQSAPHSHSHAHDHPFVRLPAHS.

Residues 133-161 (EPEAGAYQSAPHSHSHAHDHPFVRLPAHS) form a disordered region.

The protein belongs to the UreE family.

It localises to the cytoplasm. Involved in urease metallocenter assembly. Binds nickel. Probably functions as a nickel donor during metallocenter assembly. The chain is Urease accessory protein UreE from Pseudomonas putida (strain W619).